Reading from the N-terminus, the 88-residue chain is Small ribosomal subunit protein bS16 (88 aa).

Belongs to the bacterial ribosomal protein bS16 family.

This Mesomycoplasma hyopneumoniae (strain 232) (Mycoplasma hyopneumoniae) protein is Small ribosomal subunit protein bS16.